A 738-amino-acid chain; its full sequence is 1,4-alpha-glucan branching enzyme GlgB (738 aa).

Residue Asp-399 is the Nucleophile of the active site. Glu-452 (proton donor) is an active-site residue.

This sequence belongs to the glycosyl hydrolase 13 family. GlgB subfamily. In terms of assembly, monomer.

It carries out the reaction Transfers a segment of a (1-&gt;4)-alpha-D-glucan chain to a primary hydroxy group in a similar glucan chain.. It participates in glycan biosynthesis; glycogen biosynthesis. Its function is as follows. Catalyzes the formation of the alpha-1,6-glucosidic linkages in glycogen by scission of a 1,4-alpha-linked oligosaccharide from growing alpha-1,4-glucan chains and the subsequent attachment of the oligosaccharide to the alpha-1,6 position. This is 1,4-alpha-glucan branching enzyme GlgB from Chlamydia trachomatis serovar L2b (strain UCH-1/proctitis).